A 382-amino-acid polypeptide reads, in one-letter code: N-acetyldiaminopimelate deacetylase (382 aa).

Asp73 is a catalytic residue. The active-site Proton acceptor is Glu132.

It belongs to the peptidase M20A family. N-acetyldiaminopimelate deacetylase subfamily.

It carries out the reaction N-acetyl-(2S,6S)-2,6-diaminopimelate + H2O = (2S,6S)-2,6-diaminopimelate + acetate. The protein operates within amino-acid biosynthesis; L-lysine biosynthesis via DAP pathway; LL-2,6-diaminopimelate from (S)-tetrahydrodipicolinate (acetylase route): step 3/3. Functionally, catalyzes the conversion of N-acetyl-diaminopimelate to diaminopimelate and acetate. In Oenococcus oeni (strain ATCC BAA-331 / PSU-1), this protein is N-acetyldiaminopimelate deacetylase.